The sequence spans 163 residues: Putative 4-hydroxy-4-methyl-2-oxoglutarate aldolase (163 aa).

Substrate is bound by residues 76-79 (GDMI) and Arg-98. Residue Asp-99 coordinates a divalent metal cation.

Belongs to the class II aldolase/RraA-like family. As to quaternary structure, homotrimer. A divalent metal cation serves as cofactor.

The catalysed reaction is 4-hydroxy-4-methyl-2-oxoglutarate = 2 pyruvate. It catalyses the reaction oxaloacetate + H(+) = pyruvate + CO2. In terms of biological role, catalyzes the aldol cleavage of 4-hydroxy-4-methyl-2-oxoglutarate (HMG) into 2 molecules of pyruvate. Also contains a secondary oxaloacetate (OAA) decarboxylase activity due to the common pyruvate enolate transition state formed following C-C bond cleavage in the retro-aldol and decarboxylation reactions. This chain is Putative 4-hydroxy-4-methyl-2-oxoglutarate aldolase, found in Pseudomonas fluorescens.